Here is a 444-residue protein sequence, read N- to C-terminus: Exodeoxyribonuclease 7 large subunit (444 aa).

The protein belongs to the XseA family. As to quaternary structure, heterooligomer composed of large and small subunits.

It is found in the cytoplasm. The catalysed reaction is Exonucleolytic cleavage in either 5'- to 3'- or 3'- to 5'-direction to yield nucleoside 5'-phosphates.. Bidirectionally degrades single-stranded DNA into large acid-insoluble oligonucleotides, which are then degraded further into small acid-soluble oligonucleotides. The sequence is that of Exodeoxyribonuclease 7 large subunit from Xylella fastidiosa (strain M23).